The following is a 229-amino-acid chain: Peptidase E (229 aa).

Active-site charge relay system residues include Ser120, Asp135, and His157.

Belongs to the peptidase S51 family.

The protein localises to the cytoplasm. The catalysed reaction is Dipeptidase E catalyzes the hydrolysis of dipeptides Asp-|-Xaa. It does not act on peptides with N-terminal Glu, Asn or Gln, nor does it cleave isoaspartyl peptides.. Its function is as follows. Hydrolyzes dipeptides containing N-terminal aspartate residues. May play a role in allowing the cell to use peptide aspartate to spare carbon otherwise required for the synthesis of the aspartate family of amino acids. This is Peptidase E from Salmonella newport (strain SL254).